Consider the following 846-residue polypeptide: DNA mismatch repair protein MutS (846 aa).

610–617 is an ATP binding site; sequence GPNMGGKS.

It belongs to the DNA mismatch repair MutS family.

Functionally, this protein is involved in the repair of mismatches in DNA. It is possible that it carries out the mismatch recognition step. This protein has a weak ATPase activity. This chain is DNA mismatch repair protein MutS, found in Legionella pneumophila (strain Paris).